The sequence spans 476 residues: Siroheme synthase (476 aa).

The interval 1 to 203 (MHYFPVFADL…RQTEAAKKEL (203 aa)) is precorrin-2 dehydrogenase /sirohydrochlorin ferrochelatase. NAD(+) is bound by residues 22–23 (GV) and 43–44 (QK). Position 128 is a phosphoserine (serine 128). Positions 214 to 476 (GFVSLVGAGP…LDSLRIESVA (263 aa)) are uroporphyrinogen-III C-methyltransferase. Residue proline 223 participates in S-adenosyl-L-methionine binding. Aspartate 246 (proton acceptor) is an active-site residue. Lysine 268 acts as the Proton donor in catalysis. Residues 299–301 (GGD), valine 304, 329–330 (TA), methionine 381, and glycine 410 contribute to the S-adenosyl-L-methionine site.

It in the N-terminal section; belongs to the precorrin-2 dehydrogenase / sirohydrochlorin ferrochelatase family. In the C-terminal section; belongs to the precorrin methyltransferase family.

The catalysed reaction is uroporphyrinogen III + 2 S-adenosyl-L-methionine = precorrin-2 + 2 S-adenosyl-L-homocysteine + H(+). It carries out the reaction precorrin-2 + NAD(+) = sirohydrochlorin + NADH + 2 H(+). The enzyme catalyses siroheme + 2 H(+) = sirohydrochlorin + Fe(2+). The protein operates within cofactor biosynthesis; adenosylcobalamin biosynthesis; precorrin-2 from uroporphyrinogen III: step 1/1. It functions in the pathway cofactor biosynthesis; adenosylcobalamin biosynthesis; sirohydrochlorin from precorrin-2: step 1/1. Its pathway is porphyrin-containing compound metabolism; siroheme biosynthesis; precorrin-2 from uroporphyrinogen III: step 1/1. It participates in porphyrin-containing compound metabolism; siroheme biosynthesis; siroheme from sirohydrochlorin: step 1/1. The protein operates within porphyrin-containing compound metabolism; siroheme biosynthesis; sirohydrochlorin from precorrin-2: step 1/1. Multifunctional enzyme that catalyzes the SAM-dependent methylations of uroporphyrinogen III at position C-2 and C-7 to form precorrin-2 via precorrin-1. Then it catalyzes the NAD-dependent ring dehydrogenation of precorrin-2 to yield sirohydrochlorin. Finally, it catalyzes the ferrochelation of sirohydrochlorin to yield siroheme. The polypeptide is Siroheme synthase (Actinobacillus succinogenes (strain ATCC 55618 / DSM 22257 / CCUG 43843 / 130Z)).